A 191-amino-acid polypeptide reads, in one-letter code: Hypoxanthine/guanine phosphoribosyltransferase (191 aa).

It belongs to the purine/pyrimidine phosphoribosyltransferase family. Archaeal HPRT subfamily. As to quaternary structure, homodimer.

The protein localises to the cytoplasm. The catalysed reaction is IMP + diphosphate = hypoxanthine + 5-phospho-alpha-D-ribose 1-diphosphate. It catalyses the reaction GMP + diphosphate = guanine + 5-phospho-alpha-D-ribose 1-diphosphate. It functions in the pathway purine metabolism; IMP biosynthesis via salvage pathway; IMP from hypoxanthine: step 1/1. Its function is as follows. Catalyzes a salvage reaction resulting in the formation of IMP that is energically less costly than de novo synthesis. The chain is Hypoxanthine/guanine phosphoribosyltransferase from Methanocella arvoryzae (strain DSM 22066 / NBRC 105507 / MRE50).